A 164-amino-acid polypeptide reads, in one-letter code: uncharacterized protein (164 aa).

The interval 46–142 (GRSPEQKEHV…APDNSIYDTL (97 aa)) is disordered.

This is an uncharacterized protein from Caenorhabditis elegans.